Reading from the N-terminus, the 359-residue chain is GTP cyclohydrolase FolE2 (359 aa).

Belongs to the GTP cyclohydrolase IV family.

The catalysed reaction is GTP + H2O = 7,8-dihydroneopterin 3'-triphosphate + formate + H(+). The protein operates within cofactor biosynthesis; 7,8-dihydroneopterin triphosphate biosynthesis; 7,8-dihydroneopterin triphosphate from GTP: step 1/1. Its function is as follows. Converts GTP to 7,8-dihydroneopterin triphosphate. This chain is GTP cyclohydrolase FolE2, found in Cereibacter sphaeroides (strain ATCC 17029 / ATH 2.4.9) (Rhodobacter sphaeroides).